A 245-amino-acid chain; its full sequence is MPNVALFVTCLSDTLFPSVGQATVELLEHLGCEVTFPFEQTCCGQPAYNSGYHEETKKIAKHMIETFEQADAEYIVGPSGSCVMMMRDYPHLFQDDPVWRPRAEAHAAKTFELTQFIVDVLEVTDVGAKFPAKATYHASCHMTRLLGIEAAPGKLLGNVDGLTMVPLANVHNCCGFGGTFSVKMPDVSVQMVDEKVDSILQSGAEVLIGADASCLMNIGGRLHKQGHPIKVMHIAEVLNEGVKQA.

The protein belongs to the LutA/YkgE family.

Functionally, is involved in L-lactate degradation and allows cells to grow with lactate as the sole carbon source. The sequence is that of Lactate utilization protein A from Exiguobacterium sp. (strain ATCC BAA-1283 / AT1b).